The chain runs to 400 residues: Malonyl CoA-acyl carrier protein transacylase (400 aa).

Residues Ser92 and His201 contribute to the active site.

This sequence belongs to the FabD family.

The catalysed reaction is holo-[ACP] + malonyl-CoA = malonyl-[ACP] + CoA. Functionally, is involved in the mycosubtilin synthetase assembly, by catalyzing the transfer of malonyl groups to a specific acyl-carrier-protein domain on MycA. This is Malonyl CoA-acyl carrier protein transacylase (fenF) from Bacillus subtilis.